The primary structure comprises 133 residues: 14 kDa fatty acid-binding protein (133 aa).

Residues Arg107 and 127–129 (RNY) contribute to the (5Z,8Z,11Z,14Z)-eicosatetraenoate site. (9Z)-octadecenoate-binding positions include Arg107 and 127–129 (RNY).

Belongs to the calycin superfamily. Fatty-acid binding protein (FABP) family. In terms of tissue distribution, tubercles, muscle layers and body.

The protein localises to the cytoplasm. Functionally, may play a role in the transport of fatty acids. Binds various fatty acids, such as arachidonic, oleic, palmitic and linolenic acid (in vitro). The polypeptide is 14 kDa fatty acid-binding protein (Schistosoma mansoni (Blood fluke)).